We begin with the raw amino-acid sequence, 252 residues long: Segregation and condensation protein A (252 aa).

The segment at 117-136 is disordered; sequence EREEERQNAFTKPPSDLSEF.

Belongs to the ScpA family. Component of a cohesin-like complex composed of ScpA, ScpB and the Smc homodimer, in which ScpA and ScpB bind to the head domain of Smc. The presence of the three proteins is required for the association of the complex with DNA.

It is found in the cytoplasm. Functionally, participates in chromosomal partition during cell division. May act via the formation of a condensin-like complex containing Smc and ScpB that pull DNA away from mid-cell into both cell halves. The chain is Segregation and condensation protein A from Bacillus pumilus (strain SAFR-032).